A 164-amino-acid polypeptide reads, in one-letter code: CB1 cannabinoid receptor-interacting protein 1 (164 aa).

Belongs to the CNRIP family. As to quaternary structure, interacts with the cannabinoid receptor CNR1 (via C-terminus). Does not interact with cannabinoid receptor CNR2.

Functionally, suppresses cannabinoid receptor CNR1-mediated tonic inhibition of voltage-gated calcium channels. The polypeptide is CB1 cannabinoid receptor-interacting protein 1 (Cnrip1) (Rattus norvegicus (Rat)).